The chain runs to 181 residues: Acireductone dioxygenase (181 aa).

H98, H100, E104, and H142 together coordinate Fe(2+). Ni(2+) is bound by residues H98, H100, E104, and H142.

This sequence belongs to the acireductone dioxygenase (ARD) family. As to quaternary structure, monomer. Requires Fe(2+) as cofactor. It depends on Ni(2+) as a cofactor.

The enzyme catalyses 1,2-dihydroxy-5-(methylsulfanyl)pent-1-en-3-one + O2 = 3-(methylsulfanyl)propanoate + CO + formate + 2 H(+). It catalyses the reaction 1,2-dihydroxy-5-(methylsulfanyl)pent-1-en-3-one + O2 = 4-methylsulfanyl-2-oxobutanoate + formate + 2 H(+). Its pathway is amino-acid biosynthesis; L-methionine biosynthesis via salvage pathway; L-methionine from S-methyl-5-thio-alpha-D-ribose 1-phosphate: step 5/6. Catalyzes 2 different reactions between oxygen and the acireductone 1,2-dihydroxy-3-keto-5-methylthiopentene (DHK-MTPene) depending upon the metal bound in the active site. Fe-containing acireductone dioxygenase (Fe-ARD) produces formate and 2-keto-4-methylthiobutyrate (KMTB), the alpha-ketoacid precursor of methionine in the methionine recycle pathway. Ni-containing acireductone dioxygenase (Ni-ARD) produces methylthiopropionate, carbon monoxide and formate, and does not lie on the methionine recycle pathway. The polypeptide is Acireductone dioxygenase (Alcanivorax borkumensis (strain ATCC 700651 / DSM 11573 / NCIMB 13689 / SK2)).